Here is a 30-residue protein sequence, read N- to C-terminus: Photosystem I reaction center subunit XII (30 aa).

Residues 7 to 26 (IMVALFAALFTGILALRLGT) traverse the membrane as a helical segment.

Belongs to the PsaM family.

It is found in the plastid. The protein resides in the chloroplast thylakoid membrane. This is Photosystem I reaction center subunit XII from Mesostigma viride (Green alga).